Here is a 2541-residue protein sequence, read N- to C-terminus: Talin-1 (2541 aa).

Residues 86 to 403 enclose the FERM domain; it reads RPLKIRMLDG…GYIDIILKKK (318 aa). Thr167 is subject to Phosphothreonine. An interaction with LAYN region spans residues 280 to 435; the sequence is FQAHKNCGQM…PKKSTVLQQQ (156 aa). Phosphoserine occurs at positions 405, 425, 446, 620, and 729. A helical bundle R1 region spans residues 482–655; that stretch reads RGHMPPLTSA…QASGELLQQI (174 aa). Residues 656–786 are helical bundle R2; sequence GESDTDPHFQ…ALNELLQHVK (131 aa). The interval 787–911 is helical bundle R3; it reads AHATGAGPAG…NAAAQNAIKK (125 aa). Residues 913–1044 are helical bundle R4; it reads LVQRLEHAAK…RTAAQKAQEA (132 aa). Phosphoserine is present on Ser1021. Residues 1046-1206 form a helical bundle R5 region; sequence GPLEMDSALS…NRCVSCLPGQ (161 aa). Position 1116 is a phosphotyrosine (Tyr1116). Thr1142 is modified (phosphothreonine). Residues Ser1201 and Ser1225 each carry the phosphoserine modification. The tract at residues 1207–1357 is helical bundle R6; sequence RDVDNALRAV…QLITMCTQQA (151 aa). The residue at position 1263 (Thr1263) is a Phosphothreonine. Ser1323 and Ser1328 each carry phosphoserine. Residues 1327–1948 are interaction with SYNM; the sequence is ASPNLKSQLA…CSPSDVYTKK (622 aa). Positions 1358 to 1453 are helical bundle R7A; Interaction with KANK1; that stretch reads PGQKECDNAL…AYLVGVSDPN (96 aa). The tract at residues 1359-1659 is interaction with VCL and F-actin; that stretch reads GQKECDNALR…SMRDKAPGQL (301 aa). Positions 1461–1580 are helical bundle R8; it reads LVEPTQFARA…NLSAFASNPE (120 aa). The residue at position 1544 (Lys1544) is an N6-acetyllysine. Residues 1581 to 1653 form a helical bundle R7B; Interaction with KANK1 region; sequence FSSVPAQISP…IKKLITSMRD (73 aa). A helical bundle R9 region spans residues 1655–1822; the sequence is APGQLECETA…TLNEAASAAG (168 aa). The tract at residues 1823–1973 is helical bundle R10; sequence VVGGMVDSIT…VLAALQAGNR (151 aa). Ser1849 is subject to Phosphoserine. Thr1855 carries the post-translational modification Phosphothreonine. Ser1878 is modified (phosphoserine). Positions 1974 to 2140 are helical bundle R11; it reads GTQACITAAS…TVKAVEDEAT (167 aa). Lys2031 is modified (N6-acetyllysine). Phosphoserine is present on Ser2040. At Lys2115 the chain carries N6-acetyllysine. The interval 2141–2294 is helical bundle R12; sequence KGTRALEATT…QAAEAMKGTE (154 aa). The region spanning 2293-2533 is the I/LWEQ domain; that stretch reads TEWVDPEDPT…QIRQQQYKFL (241 aa). Residues 2300–2482 are helical bundle R13; the sequence is DPTVIAENEL…AAQKAAAFED (183 aa).

As to quaternary structure, part of a complex composed of THSD1, PTK2/FAK1, TLN1 and VCL. Interacts with THSD1; this promotes interaction with PTK2/FAK1 and VCL. Interacts with NRAP and LAYN. Interacts with SYNM. Interacts with ITGB1; the interaction is prevented by competitive binding of ITGB1BP1. Binds with high affinity to VCL and with low affinity to integrins. Interacts with APBB1IP; this inhibits VCL binding. Interacts with PTK2/FAK1. Interacts with PIP5K1C. Interacts with F-actin. Interacts with SVEP1. Interacts (via R7 domain) with KANK1 or KANK2 (via KN motif); this interaction likely initiates the assembly of cortical microtubule stabilization complexes (CMSCs) at the vicinity of focal adhesions.

The protein localises to the cell projection. Its subcellular location is the ruffle membrane. It localises to the cytoplasm. The protein resides in the cytoskeleton. It is found in the cell surface. The protein localises to the cell junction. Its subcellular location is the focal adhesion. High molecular weight cytoskeletal protein concentrated at regions of cell-matrix and cell-cell contacts. Involved in connections of major cytoskeletal structures to the plasma membrane. With KANK1 co-organize the assembly of cortical microtubule stabilizing complexes (CMSCs) positioned to control microtubule-actin crosstalk at focal adhesions (FAs) rims. This chain is Talin-1 (Tln1), found in Mus musculus (Mouse).